The following is a 139-amino-acid chain: Large ribosomal subunit protein uL16c (139 aa).

Belongs to the universal ribosomal protein uL16 family. Part of the 50S ribosomal subunit.

It is found in the plastid. It localises to the chloroplast. This chain is Large ribosomal subunit protein uL16c, found in Cryptomeria japonica (Japanese cedar).